A 360-amino-acid polypeptide reads, in one-letter code: MDIKMDNFTTPSAASLESDCDLYAHHHTARILMPLHYSIVFIIGLVGNLLALIVIIQNRKKINSTTLYSTNLVISDILFTTALPTRIAYYALGFDWRIGDALCRITALVFYINTYAGVNFMTCLSIDRFFAVVHPLRYNKIKRIEHAKCICIFVWILVFGQTLPLLINPMSKQEAERTTCMEYPNFEETKSLPWILLGACFIGYVLPLVIILICYSQICCKLFKTAKQNPLTEKSGVNKKALNTIIFIIVVFVVCFTPYHVAIIQHMIKKLRLPGLLECSQRHSFQISLHFTVCLMNFNCCMDPFIYFFACKGYKRKVMKMLKRQVSVSISSAVRSAPEENSREMTETQMMIHSKSLNGK.

The Extracellular segment spans residues 1-30; that stretch reads MDIKMDNFTTPSAASLESDCDLYAHHHTAR. Residue N7 is glycosylated (N-linked (GlcNAc...) asparagine). A helical membrane pass occupies residues 31 to 56; it reads ILMPLHYSIVFIIGLVGNLLALIVII. Residues 57–76 lie on the Cytoplasmic side of the membrane; that stretch reads QNRKKINSTTLYSTNLVISD. The chain crosses the membrane as a helical span at residues 77 to 94; it reads ILFTTALPTRIAYYALGF. R86 provides a ligand contact to 7alpha,25-dihydroxycholesterol. The Extracellular portion of the chain corresponds to 95-104; sequence DWRIGDALCR. C103 and C180 are oxidised to a cystine. Residues 105 to 126 form a helical membrane-spanning segment; it reads ITALVFYINTYAGVNFMTCLSI. Residues Y111 and Y115 each coordinate 7alpha,25-dihydroxycholesterol. The segment at 125 to 133 is interaction with G proteins; the sequence is SIDRFFAVV. Over 127–148 the chain is Cytoplasmic; that stretch reads DRFFAVVHPLRYNKIKRIEHAK. A helical transmembrane segment spans residues 149–167; sequence CICIFVWILVFGQTLPLLI. Residues 168-191 lie on the Extracellular side of the membrane; it reads NPMSKQEAERTTCMEYPNFEETKS. Residues 192 to 214 form a helical membrane-spanning segment; it reads LPWILLGACFIGYVLPLVIILIC. Residues 215-240 are Cytoplasmic-facing; sequence YSQICCKLFKTAKQNPLTEKSGVNKK. The chain crosses the membrane as a helical span at residues 241 to 264; that stretch reads ALNTIIFIIVVFVVCFTPYHVAII. 7alpha,25-dihydroxycholesterol is bound at residue Y259. At 265-286 the chain is on the extracellular side; that stretch reads QHMIKKLRLPGLLECSQRHSFQ. Residues 287-311 form a helical membrane-spanning segment; that stretch reads ISLHFTVCLMNFNCCMDPFIYFFAC. Over 312-360 the chain is Cytoplasmic; that stretch reads KGYKRKVMKMLKRQVSVSISSAVRSAPEENSREMTETQMMIHSKSLNGK. S327 is subject to Phosphoserine. The interval 339 to 360 is disordered; that stretch reads EENSREMTETQMMIHSKSLNGK. Positions 347-360 are enriched in polar residues; it reads ETQMMIHSKSLNGK.

It belongs to the G-protein coupled receptor 1 family. As to quaternary structure, homodimer and heterodimer. Heterodimerizes with CXCR5; leading to modulate the interaction between of CXCL13 and CXCR5.

Its subcellular location is the cell membrane. G-protein coupled receptor expressed in lymphocytes that acts as a chemotactic receptor for B-cells, T-cells, splenic dendritic cells, monocytes/macrophages and astrocytes. Receptor for oxysterol 7-alpha,25-dihydroxycholesterol (7-alpha,25-OHC) and other related oxysterols. Mediates cell positioning and movement of a number of cells by binding the 7-alpha,25-OHC ligand that forms a chemotactic gradient. Binding of 7-alpha,25-OHC mediates the correct localization of B-cells during humoral immune responses. Guides B-cell movement along the B-cell zone-T-cell zone boundary and later to interfollicular and outer follicular regions. Its specific expression during B-cell maturation helps position B-cells appropriately for mounting T-dependent antibody responses. Collaborates with CXCR5 to mediate B-cell migration; probably by forming a heterodimer with CXCR5 that affects the interaction between of CXCL13 and CXCR5. Also acts as a chemotactic receptor for some T-cells upon binding to 7-alpha,25-OHC ligand. Promotes follicular helper T (Tfh) cells differentiation by positioning activated T-cells at the follicle-T-zone interface, promoting contact of newly activated CD4 T-cells with activated dendritic cells and exposing them to Tfh-cell-promoting inducible costimulator (ICOS) ligand. Expression in splenic dendritic cells is required for their homeostasis, localization and ability to induce B- and T-cell responses: GPR183 acts as a chemotactic receptor in dendritic cells that mediates the accumulation of CD4(+) dendritic cells in bridging channels. Regulates migration of astrocytes and is involved in communication between astrocytes and macrophages. Promotes osteoclast precursor migration to bone surfaces. Signals constitutively through G(i)-alpha, but not G(s)-alpha or G(q)-alpha. Signals constitutively also via MAPK1/3 (ERK1/2). In Bos taurus (Bovine), this protein is G-protein coupled receptor 183 (GPR183).